The primary structure comprises 436 residues: UDP-N-acetylmuramate--L-alanine ligase (436 aa).

108 to 114 serves as a coordination point for ATP; it reads GAHGKTS.

It belongs to the MurCDEF family.

Its subcellular location is the cytoplasm. The catalysed reaction is UDP-N-acetyl-alpha-D-muramate + L-alanine + ATP = UDP-N-acetyl-alpha-D-muramoyl-L-alanine + ADP + phosphate + H(+). Its pathway is cell wall biogenesis; peptidoglycan biosynthesis. Its function is as follows. Cell wall formation. The protein is UDP-N-acetylmuramate--L-alanine ligase of Bacillus cereus (strain AH187).